The primary structure comprises 339 residues: Heat-inducible transcription repressor HrcA (339 aa).

Belongs to the HrcA family.

Its function is as follows. Negative regulator of class I heat shock genes (grpE-dnaK-dnaJ and groELS operons). Prevents heat-shock induction of these operons. The protein is Heat-inducible transcription repressor HrcA of Clostridium perfringens (strain ATCC 13124 / DSM 756 / JCM 1290 / NCIMB 6125 / NCTC 8237 / Type A).